The sequence spans 324 residues: Lactonase drp35 (324 aa).

Glu47, Ser109, Gly111, Asp129, Thr132, Tyr134, Asp137, Asn184, Asp235, and Ser236 together coordinate Ca(2+). Asp235 functions as the Proton donor in the catalytic mechanism.

Belongs to the SMP-30/CGR1 family. It depends on Ca(2+) as a cofactor.

The protein resides in the cytoplasm. Functionally, exhibits lactonase activity. Acts in cells with perturbed membrane integrity and is possibly related to the membrane homeostasis. The chain is Lactonase drp35 (drp35) from Staphylococcus saprophyticus subsp. saprophyticus (strain ATCC 15305 / DSM 20229 / NCIMB 8711 / NCTC 7292 / S-41).